Here is a 469-residue protein sequence, read N- to C-terminus: Ribulose bisphosphate carboxylase large chain (469 aa).

An N6,N6,N6-trimethyllysine modification is found at Lys-5. Positions 114 and 164 each coordinate substrate. Lys-166 serves as the catalytic Proton acceptor. Lys-168 contacts substrate. Lys-192, Asp-194, and Glu-195 together coordinate Mg(2+). At Lys-192 the chain carries N6-carboxylysine. His-285 (proton acceptor) is an active-site residue. Residues Arg-286, His-318, and Ser-370 each contribute to the substrate site.

Belongs to the RuBisCO large chain family. Type I subfamily. In terms of assembly, heterohexadecamer of 8 large chains and 8 small chains; disulfide-linked. The disulfide link is formed within the large subunit homodimers. It depends on Mg(2+) as a cofactor. In terms of processing, the disulfide bond which can form in the large chain dimeric partners within the hexadecamer appears to be associated with oxidative stress and protein turnover.

Its subcellular location is the plastid. It localises to the chloroplast. It catalyses the reaction 2 (2R)-3-phosphoglycerate + 2 H(+) = D-ribulose 1,5-bisphosphate + CO2 + H2O. The catalysed reaction is D-ribulose 1,5-bisphosphate + O2 = 2-phosphoglycolate + (2R)-3-phosphoglycerate + 2 H(+). Its function is as follows. RuBisCO catalyzes two reactions: the carboxylation of D-ribulose 1,5-bisphosphate, the primary event in carbon dioxide fixation, as well as the oxidative fragmentation of the pentose substrate in the photorespiration process. Both reactions occur simultaneously and in competition at the same active site. The polypeptide is Ribulose bisphosphate carboxylase large chain (Cephalanthus occidentalis (Common buttonbush)).